The primary structure comprises 449 residues: Phosphoglucosamine mutase (449 aa).

The Phosphoserine intermediate role is filled by Ser100. Positions 100, 241, 243, and 245 each coordinate Mg(2+). At Ser100 the chain carries Phosphoserine.

Belongs to the phosphohexose mutase family. It depends on Mg(2+) as a cofactor. In terms of processing, activated by phosphorylation.

The enzyme catalyses alpha-D-glucosamine 1-phosphate = D-glucosamine 6-phosphate. Functionally, catalyzes the conversion of glucosamine-6-phosphate to glucosamine-1-phosphate. The sequence is that of Phosphoglucosamine mutase from Clostridium botulinum (strain ATCC 19397 / Type A).